The sequence spans 94 residues: Small ribosomal subunit protein uS19 (94 aa).

This sequence belongs to the universal ribosomal protein uS19 family.

In terms of biological role, protein S19 forms a complex with S13 that binds strongly to the 16S ribosomal RNA. The polypeptide is Small ribosomal subunit protein uS19 (Dictyoglomus thermophilum (strain ATCC 35947 / DSM 3960 / H-6-12)).